Here is a 44-residue protein sequence, read N- to C-terminus: Large ribosomal subunit protein bL36 (44 aa).

Belongs to the bacterial ribosomal protein bL36 family.

This chain is Large ribosomal subunit protein bL36, found in Pseudoalteromonas translucida (strain TAC 125).